We begin with the raw amino-acid sequence, 236 residues long: Small ribosomal subunit protein uS2c (236 aa).

This sequence belongs to the universal ribosomal protein uS2 family.

The protein resides in the plastid. It localises to the chloroplast. This is Small ribosomal subunit protein uS2c (rps2) from Crucihimalaya wallichii (Rock-cress).